Here is a 508-residue protein sequence, read N- to C-terminus: Histidine ammonia-lyase (508 aa).

Residues 141–143 (ASG) constitute a cross-link (5-imidazolinone (Ala-Gly)). Ser142 carries the post-translational modification 2,3-didehydroalanine (Ser).

This sequence belongs to the PAL/histidase family. Post-translationally, contains an active site 4-methylidene-imidazol-5-one (MIO), which is formed autocatalytically by cyclization and dehydration of residues Ala-Ser-Gly.

It is found in the cytoplasm. The enzyme catalyses L-histidine = trans-urocanate + NH4(+). It functions in the pathway amino-acid degradation; L-histidine degradation into L-glutamate; N-formimidoyl-L-glutamate from L-histidine: step 1/3. This is Histidine ammonia-lyase from Geobacillus sp. (strain WCH70).